Here is a 365-residue protein sequence, read N- to C-terminus: Carbamoyl phosphate synthase small chain (365 aa).

2 CPSase regions span residues 1-166 and 1-169; these read MKRQ…PSPG and MKRQ…GRGH. Residues Ser45, Gly218, and Gly220 each coordinate L-glutamine. In terms of domain architecture, Glutamine amidotransferase type-1 spans 170–357; that stretch reads RVVLVDFGMK…LTMIENFKKE (188 aa). Residue Cys245 is the Nucleophile of the active site. Leu246, Gln249, Asn287, Gly289, and Tyr290 together coordinate L-glutamine. Catalysis depends on residues His330 and Glu332.

It belongs to the CarA family. In terms of assembly, composed of two chains; the small (or glutamine) chain promotes the hydrolysis of glutamine to ammonia, which is used by the large (or ammonia) chain to synthesize carbamoyl phosphate. Tetramer of heterodimers (alpha,beta)4.

The enzyme catalyses hydrogencarbonate + L-glutamine + 2 ATP + H2O = carbamoyl phosphate + L-glutamate + 2 ADP + phosphate + 2 H(+). The catalysed reaction is L-glutamine + H2O = L-glutamate + NH4(+). It participates in amino-acid biosynthesis; L-arginine biosynthesis; carbamoyl phosphate from bicarbonate: step 1/1. Its pathway is pyrimidine metabolism; UMP biosynthesis via de novo pathway; (S)-dihydroorotate from bicarbonate: step 1/3. In terms of biological role, small subunit of the glutamine-dependent carbamoyl phosphate synthetase (CPSase). CPSase catalyzes the formation of carbamoyl phosphate from the ammonia moiety of glutamine, carbonate, and phosphate donated by ATP, constituting the first step of 2 biosynthetic pathways, one leading to arginine and/or urea and the other to pyrimidine nucleotides. The small subunit (glutamine amidotransferase) binds and cleaves glutamine to supply the large subunit with the substrate ammonia. This Bacillus anthracis protein is Carbamoyl phosphate synthase small chain.